We begin with the raw amino-acid sequence, 398 residues long: S-adenosylmethionine synthase (398 aa).

ATP is bound at residue histidine 16. Aspartate 18 serves as a coordination point for Mg(2+). Glutamate 44 contributes to the K(+) binding site. Residues glutamate 57 and glutamine 100 each coordinate L-methionine. Positions glutamine 100 to glutamate 110 are flexible loop. ATP contacts are provided by residues aspartate 175–lysine 177, arginine 242–phenylalanine 243, aspartate 251, arginine 257–lysine 258, alanine 274, and lysine 278. Position 251 (aspartate 251) interacts with L-methionine. Lysine 282 serves as a coordination point for L-methionine.

The protein belongs to the AdoMet synthase family. In terms of assembly, homotetramer; dimer of dimers. Mg(2+) is required as a cofactor. K(+) serves as cofactor.

Its subcellular location is the cytoplasm. The enzyme catalyses L-methionine + ATP + H2O = S-adenosyl-L-methionine + phosphate + diphosphate. Its pathway is amino-acid biosynthesis; S-adenosyl-L-methionine biosynthesis; S-adenosyl-L-methionine from L-methionine: step 1/1. In terms of biological role, catalyzes the formation of S-adenosylmethionine (AdoMet) from methionine and ATP. The overall synthetic reaction is composed of two sequential steps, AdoMet formation and the subsequent tripolyphosphate hydrolysis which occurs prior to release of AdoMet from the enzyme. This is S-adenosylmethionine synthase from Streptococcus agalactiae serotype III (strain NEM316).